A 338-amino-acid chain; its full sequence is Gibberellin 2-beta-dioxygenase 8 (338 aa).

In terms of domain architecture, Fe2OG dioxygenase spans 191–290 (NTCYLRMNRY…RFSTAYFMCP (100 aa)). 3 residues coordinate Fe cation: H215, D217, and H271. The active site involves R281. R281 is a 2-oxoglutarate binding site.

The protein belongs to the iron/ascorbate-dependent oxidoreductase family. GA2OX subfamily. The cofactor is Fe(2+).

The catalysed reaction is gibberellin A1 + 2-oxoglutarate + O2 = gibberellin A8 + succinate + CO2. Its pathway is plant hormone biosynthesis; gibberellin biosynthesis. Its function is as follows. Catalyzes the 2-beta-hydroxylation of gibberellins (GA) precursors, rendering them unable to be converted to active GAs. Hydroxylates the C20-GA GA12 and GA53, but is not active on C19-GAs, like GA1, GA4, GA9 and GA20. This chain is Gibberellin 2-beta-dioxygenase 8 (GA2OX8), found in Arabidopsis thaliana (Mouse-ear cress).